The primary structure comprises 514 residues: MNLTEKWKDLLEAEGADMPEIATATKQKIMSKIFENQDRDINNDPMYRDPQLVEAFNAGLNEAVVNGDHGYDPANIAQGVTTGAVTNIGPTVMGMVRRAIPQLIAFDIAGVQPMTGPTSQVFTLRSVYGKDPLTGAEAFHPTRQADASFSGQAAASTIADFPTTGAATDGTPYKAEVTTSGGDVSMRYFLALGAVTLAVAGQMTATEYTDGVAGGLLVEIDAGMATSQAELQENFNGSSNNEWNEMSFRIDKQVVEAKSRQLKAQYSIELAQDLRAVHGLDADAELSGILANEVMVELNREIVNLVNSQAQIGKSGWTQGAGAAGVFDFSDAVDVKGARWAGEAYKALLIQIEKEANEIGRQTGRGNGNFIIASRNVVSALSMTDTLVGPAAQGMQDGSMNTDTNQTVFAGVLGGRFKVYIDQYAVNDYFTVGFKGSTEMDAGVFYSPYVPLTPLRGSDSKNFQPVIGFKTRYGVQVNPFADPTASATKVGNGAPVAASMGKNAYFRRVFVKGL.

The protein belongs to the T4 phage capsid protein family. As to quaternary structure, homohexamer. Interacts with the portal protein. Interacts with the capsid vertex protein that forms pentamers. Post-translationally, a proteolytic cleavage by the prohead core protein protease gives rise to the mature major capsid protein during virus maturation.

It is found in the virion. In terms of biological role, major capsid protein that self-associates to form hexamers, building most of the capsid in association with pentons made of the capsid vertex protein and one dodecamer of the portal protein. The chain is Major capsid protein from Vibrio parahaemolyticus (KVP40).